The chain runs to 165 residues: Methylated-DNA--protein-cysteine methyltransferase (165 aa).

Cys-126 (nucleophile; methyl group acceptor) is an active-site residue.

It belongs to the MGMT family.

The protein localises to the cytoplasm. It carries out the reaction a 6-O-methyl-2'-deoxyguanosine in DNA + L-cysteinyl-[protein] = S-methyl-L-cysteinyl-[protein] + a 2'-deoxyguanosine in DNA. The enzyme catalyses a 4-O-methyl-thymidine in DNA + L-cysteinyl-[protein] = a thymidine in DNA + S-methyl-L-cysteinyl-[protein]. In terms of biological role, involved in the cellular defense against the biological effects of O6-methylguanine (O6-MeG) and O4-methylthymine (O4-MeT) in DNA. Repairs the methylated nucleobase in DNA by stoichiometrically transferring the methyl group to a cysteine residue in the enzyme. This is a suicide reaction: the enzyme is irreversibly inactivated. The sequence is that of Methylated-DNA--protein-cysteine methyltransferase from Mycobacterium bovis (strain ATCC BAA-935 / AF2122/97).